Here is a 275-residue protein sequence, read N- to C-terminus: Exosome complex component RRP40 (275 aa).

A2 bears the N-acetylalanine mark. Residue K151 forms a Glycyl lysine isopeptide (Lys-Gly) (interchain with G-Cter in SUMO2) linkage.

This sequence belongs to the RRP40 family. As to quaternary structure, component of the RNA exosome core complex (Exo-9), composed of EXOSC1, EXOSC2, EXOSC3, EXOSC4, EXOSC5, EXOSC6, EXOSC7, EXOSC8 and EXOSC9; within the complex interacts with EXOSC5 and EXOSC9. The catalytically inactive RNA exosome core complex (Exo-9) associates with the catalytic subunit EXOSC10/RRP6. Exo-9 may associate with DIS3 to form the nucleolar exosome complex, or DIS3L to form the cytoplasmic exosome complex. Exo-9 is formed by a hexameric base ring consisting of the heterodimers EXOSC4-EXOSC9, EXOSC5-EXOSC8 and EXOSC6-EXOSC7, and a cap ring consisting of EXOSC1, EXOSC2 and EXOSC3. The RNA exosome complex associates with cofactors C1D/RRP47, MPHOSPH6/MPP6 and MTREX/MTR4. Interacts with MPHOSPH6/MPP6; the interaction is direct. Interacts with GTPBP1. Interacts with ZC3HAV1. Interacts with DDX17 only in the presence of ZC3HAV1 in an RNA-independent manner. Interacts with DHX36; this interaction occurs in a RNase-insensitive manner. Interacts with HBS1L isoform 2.

The protein resides in the cytoplasm. It is found in the nucleus. It localises to the nucleolus. In terms of biological role, non-catalytic component of the RNA exosome complex which has 3'-&gt;5' exoribonuclease activity and participates in a multitude of cellular RNA processing and degradation events. In the nucleus, the RNA exosome complex is involved in proper maturation of stable RNA species such as rRNA, snRNA and snoRNA, in the elimination of RNA processing by-products and non-coding 'pervasive' transcripts, such as antisense RNA species and promoter-upstream transcripts (PROMPTs), and of mRNAs with processing defects, thereby limiting or excluding their export to the cytoplasm. The RNA exosome may be involved in Ig class switch recombination (CSR) and/or Ig variable region somatic hypermutation (SHM) by targeting AICDA deamination activity to transcribed dsDNA substrates. In the cytoplasm, the RNA exosome complex is involved in general mRNA turnover and specifically degrades inherently unstable mRNAs containing AU-rich elements (AREs) within their 3' untranslated regions, and in RNA surveillance pathways, preventing translation of aberrant mRNAs. It seems to be involved in degradation of histone mRNA. The catalytic inactive RNA exosome core complex of 9 subunits (Exo-9) is proposed to play a pivotal role in the binding and presentation of RNA for ribonucleolysis, and to serve as a scaffold for the association with catalytic subunits and accessory proteins or complexes. EXOSC3 as peripheral part of the Exo-9 complex stabilizes the hexameric ring of RNase PH-domain subunits through contacts with EXOSC9 and EXOSC5. This is Exosome complex component RRP40 (EXOSC3) from Bos taurus (Bovine).